The following is a 153-amino-acid chain: Interleukin-4 (153 aa).

Residues 1–24 (MGLTSQLLPPLFFLLACAGNFAHG) form the signal peptide. Disulfide bonds link Cys-27/Cys-151, Cys-48/Cys-89, and Cys-70/Cys-123. An N-linked (GlcNAc...) asparagine glycan is attached at Asn-62. An N-linked (GlcNAc...) asparagine glycan is attached at Asn-129.

Belongs to the IL-4/IL-13 family.

It is found in the secreted. In terms of biological role, participates in at least several B-cell activation processes as well as of other cell types. It is a costimulator of DNA-synthesis. It induces the expression of class II MHC molecules on resting B-cells. It enhances both secretion and cell surface expression of IgE and IgG1. It also regulates the expression of the low affinity Fc receptor for IgE (CD23) on both lymphocytes and monocytes. Positively regulates IL31RA expression in macrophages. Stimulates autophagy in dendritic cells by interfering with mTORC1 signaling and through the induction of RUFY4. In Macaca mulatta (Rhesus macaque), this protein is Interleukin-4 (IL4).